The sequence spans 435 residues: Glutamyl-tRNA reductase (435 aa).

Residues 49–52 (TCNR), S109, 114–116 (EGQ), and Q120 each bind substrate. C50 (nucleophile) is an active-site residue. 198-203 (GAGRMS) contacts NADP(+).

This sequence belongs to the glutamyl-tRNA reductase family. In terms of assembly, homodimer.

It catalyses the reaction (S)-4-amino-5-oxopentanoate + tRNA(Glu) + NADP(+) = L-glutamyl-tRNA(Glu) + NADPH + H(+). It participates in porphyrin-containing compound metabolism; protoporphyrin-IX biosynthesis; 5-aminolevulinate from L-glutamyl-tRNA(Glu): step 1/2. It functions in the pathway porphyrin-containing compound metabolism; chlorophyll biosynthesis. In terms of biological role, catalyzes the NADPH-dependent reduction of glutamyl-tRNA(Glu) to glutamate 1-semialdehyde (GSA). The chain is Glutamyl-tRNA reductase from Prochlorococcus marinus (strain MIT 9515).